A 32-amino-acid polypeptide reads, in one-letter code: Peptide tarsal-less AA (32 aa).

Positions 1–32 (MLDPTGTYRRPRDTQDSRQKRRQDCLDPTGQY) are disordered. Repeat 1 spans residues 2–8 (LDPTGTY). Residues 2 to 32 (LDPTGTYRRPRDTQDSRQKRRQDCLDPTGQY) form a 2 X 7 AA repeats of L-D-P-T-G-[TQ]-Y region. The segment covering 10–25 (RPRDTQDSRQKRRQDC) has biased composition (basic and acidic residues). Copy 2 of the repeat occupies 26–32 (LDPTGQY).

The protein localises to the cytoplasm. It is found in the nucleus. One of four peptides (tal-1A, tal-2A, tal-3A and tal-AA) produced from a polycistronic gene that function redundantly in several developmental processes. Required in early stages of leg development for the intercalation of the tarsal segments during the mid-third instar stage and later for tarsal joint formation. Promotes the post-translational modification of ovo isoform B (svb) into its active form which in turn initiates trichome development and promotes tarsal joint development. This is likely due to recruitment of the E3 ubiquitin-protein ligase Ubr3 to svb for ubiquitination of its N-terminus, converting svb into a transcriptional activator. Also enhances interaction of Ubr3 with Diap1. Required for correct wing and leg formation through its regulation of several genes including those in the Notch signaling pathway. Essential for denticle formation and may have a role in the developmental timing of trichome differentiation. Essential for the development of taenidial folds in the trachea. In Drosophila melanogaster (Fruit fly), this protein is Peptide tarsal-less AA.